A 276-amino-acid polypeptide reads, in one-letter code: NH(3)-dependent NAD(+) synthetase (276 aa).

Residue 51 to 58 (GISGGVDS) participates in ATP binding. Residue aspartate 57 coordinates Mg(2+). A deamido-NAD(+)-binding site is contributed by arginine 148. Threonine 168 contributes to the ATP binding site. Glutamate 173 contributes to the Mg(2+) binding site. Deamido-NAD(+) contacts are provided by lysine 181 and aspartate 188. ATP contacts are provided by lysine 197 and threonine 219. 268–269 (HK) contributes to the deamido-NAD(+) binding site.

This sequence belongs to the NAD synthetase family. Homodimer.

The enzyme catalyses deamido-NAD(+) + NH4(+) + ATP = AMP + diphosphate + NAD(+) + H(+). It participates in cofactor biosynthesis; NAD(+) biosynthesis; NAD(+) from deamido-NAD(+) (ammonia route): step 1/1. In terms of biological role, catalyzes the ATP-dependent amidation of deamido-NAD to form NAD. Uses ammonia as a nitrogen source. In Streptomyces coelicolor (strain ATCC BAA-471 / A3(2) / M145), this protein is NH(3)-dependent NAD(+) synthetase.